The primary structure comprises 161 residues: Lipoprotein signal peptidase (161 aa).

3 helical membrane-spanning segments follow: residues 9–29 (ISLL…WLIT), 63–83 (KMLF…IFYI), and 88–108 (FNLF…GNFI). Residues D118 and D136 contribute to the active site. The chain crosses the membrane as a helical span at residues 131–151 (IFNIADSSLTIGVIFVIITLI).

Belongs to the peptidase A8 family.

It localises to the cell membrane. The enzyme catalyses Release of signal peptides from bacterial membrane prolipoproteins. Hydrolyzes -Xaa-Yaa-Zaa-|-(S,diacylglyceryl)Cys-, in which Xaa is hydrophobic (preferably Leu), and Yaa (Ala or Ser) and Zaa (Gly or Ala) have small, neutral side chains.. Its pathway is protein modification; lipoprotein biosynthesis (signal peptide cleavage). Its function is as follows. This protein specifically catalyzes the removal of signal peptides from prolipoproteins. This chain is Lipoprotein signal peptidase, found in Staphylococcus epidermidis (strain ATCC 35984 / DSM 28319 / BCRC 17069 / CCUG 31568 / BM 3577 / RP62A).